The primary structure comprises 1531 residues: Multidrug resistance-associated protein 1 (1531 aa).

Over 1-33 (MALRGFCSADGSDPLWDWNVTWYTSNPDFTKCF) the chain is Extracellular. N-linked (GlcNAc...) asparagine glycosylation occurs at asparagine 19. Residues 34-54 (QNTVLVWVPCFYLWACFPFYF) form a helical membrane-spanning segment. At 55–74 (LYLSRHDRGYIQMTLLNKTK) the chain is on the cytoplasmic side. A helical membrane pass occupies residues 75-95 (TALGFLLWIVCWADLFYSFWE). The Extracellular portion of the chain corresponds to 96–100 (RSRGI). Residues 101–121 (FLAPVFLVSPTLLGITMLLAT) form a helical membrane-spanning segment. Topologically, residues 122–133 (FLIQLERRKGVQ) are cytoplasmic. The chain crosses the membrane as a helical span at residues 134-154 (SSGIMLTFWLVALLCALAILR). Residues 155-172 (SKIMTALKEDVQVDLFRD) lie on the Extracellular side of the membrane. Residues 173–193 (MTFYVYFSLVLIQLVLSCFSD) traverse the membrane as a helical segment. Residues 194-316 (RSPLFSETIH…KEWNPSLFKV (123 aa)) lie on the Cytoplasmic side of the membrane. Residue tyrosine 277 is modified to Phosphotyrosine. Serine 289 carries the post-translational modification Phosphoserine. The helical transmembrane segment at 317-337 (LYKTFGPYFLMSFFFKAIHDL) threads the bilayer. The ABC transmembrane type-1 1 domain occupies 325–608 (FLMSFFFKAI…LPMVISSIVQ (284 aa)). The Extracellular segment spans residues 338 to 363 (MMFSGPEILKLLINFVNDTKAPDWQG). The helical transmembrane segment at 364–384 (YFYTALLFVAACLQTLVLHQY) threads the bilayer. The Cytoplasmic portion of the chain corresponds to 385–440 (FHICFVSGMRIKTAVIGAVYRKALVITNAARKSSTVGEIVNLMSVDAQRFMDLATY). A helical membrane pass occupies residues 441–461 (INMIWSAPLQVILALYLLWRN). At 462–464 (LGP) the chain is on the extracellular side. The chain crosses the membrane as a helical span at residues 465-485 (PILAGVAVMVLMVPVNAVMAM). Residues 486–547 (KTKTYQVAHM…VLKKSAYLAA (62 aa)) lie on the Cytoplasmic side of the membrane. Lysine 503 carries the post-translational modification N6-succinyllysine. The helical transmembrane segment at 548–568 (VGTFTWVCTPFLVALCTFAVY) threads the bilayer. Over 569 to 590 (VTIDKNNVLDAQKAFVSLALFN) the chain is Extracellular. Residues 591–611 (ILRFPLNILPMVISSIVQASV) form a helical membrane-spanning segment. Residues 612–967 (SLKRLRIFLS…VKLSVYWDYM (356 aa)) lie on the Cytoplasmic side of the membrane. One can recognise an ABC transporter 1 domain in the interval 644 to 868 (ITVRNATFTW…DGAFAEFLRT (225 aa)). 678 to 685 (GQVGCGKS) lines the ATP pocket. The disordered stretch occupies residues 871 to 893 (SAEQEQDPEDNGVTGVSGPGKEA). Phosphoserine occurs at positions 905, 915, and 930. Residues 917 to 938 (SSSYSGDVSRQHNSTAELQKDG) are disordered. The span at 922–933 (GDVSRQHNSTAE) shows a compositional bias: polar residues. Residues 968–988 (KAIGLFISFLSIFLFICNHVA) form a helical membrane-spanning segment. The region spanning 975–1256 (SFLSIFLFIC…LVRMSSEMET (282 aa)) is the ABC transmembrane type-1 2 domain. The Extracellular segment spans residues 989–1025 (ALASNYWLSLWTDDPIVNGTQEHTKVRLSVYGALGIS). A glycan (N-linked (GlcNAc...) asparagine) is linked at asparagine 1006. Residues 1026–1046 (QGIAVFGYSMAVSIGGILASR) traverse the membrane as a helical segment. Residues 1047–1089 (CLHVDLLHSILRSPMSFFERTPSGNLVNRFSKELDTVDSMIPE) lie on the Cytoplasmic side of the membrane. The helical transmembrane segment at 1090 to 1110 (VIKMFMGSLFNVIGACIVILL) threads the bilayer. A topological domain (extracellular) is located at residue alanine 1111. A helical membrane pass occupies residues 1112–1132 (TPIAAIIIPPLGLIYFFVQRF). Over 1133–1203 (YVASSRQLKR…VANRWLAVRL (71 aa)) the chain is Cytoplasmic. Residues 1204–1224 (ECVGNCIVLFAALFAVISRHS) traverse the membrane as a helical segment. The Extracellular portion of the chain corresponds to 1225–1226 (LS). A helical membrane pass occupies residues 1227 to 1247 (AGLVGLSVSYSLQVTTYLNWL). The Cytoplasmic segment spans residues 1248–1531 (VRMSSEMETN…YNMARDAGLV (284 aa)). In terms of domain architecture, ABC transporter 2 spans 1293–1527 (VEFRNYCLRY…RGLFYNMARD (235 aa)). 1327–1334 (GRTGAGKS) is an ATP binding site.

Belongs to the ABC transporter superfamily. ABCC family. Conjugate transporter (TC 3.A.1.208) subfamily.

The protein resides in the cell membrane. It is found in the basolateral cell membrane. It carries out the reaction ATP + H2O + xenobioticSide 1 = ADP + phosphate + xenobioticSide 2.. It catalyses the reaction an S-substituted glutathione(in) + ATP + H2O = an S-substituted glutathione(out) + ADP + phosphate + H(+). The enzyme catalyses sphing-4-enine 1-phosphate(in) + ATP + H2O = sphing-4-enine 1-phosphate(out) + ADP + phosphate + H(+). The catalysed reaction is leukotriene C4(in) + ATP + H2O = leukotriene C4(out) + ADP + phosphate + H(+). It carries out the reaction 17beta-estradiol 17-O-(beta-D-glucuronate)(in) + ATP + H2O = 17beta-estradiol 17-O-(beta-D-glucuronate)(out) + ADP + phosphate + H(+). It catalyses the reaction daunorubicin(in) + ATP + H2O = daunorubicin(out) + ADP + phosphate + H(+). The enzyme catalyses vincristine(in) + ATP + H2O = vincristine(out) + ADP + phosphate + H(+). The catalysed reaction is 2',3'-cGAMP(in) + ATP + H2O = 2',3'-cGAMP(out) + ADP + phosphate + H(+). It carries out the reaction S-[(2E,6E,10E)-geranylgeranyl]-L-glutathione(in) + ATP + H2O = S-[(2E,6E,10E)-geranylgeranyl]-L-glutathione(out) + ADP + phosphate + H(+). It catalyses the reaction prostaglandin A2-S-(R)-glutathione(in) + ATP + H2O = prostaglandin A2-S-(R)-glutathione(out) + ADP + phosphate + H(+). The enzyme catalyses prostaglandin A2-S-(S)-glutathione(in) + ATP + H2O = prostaglandin A2-S-(S)-glutathione(out) + ADP + phosphate + H(+). With respect to regulation, MK 571 inhibits sphingosine 1-phosphate and leukotriene C4 export. Mediates export of organic anions and drugs from the cytoplasm. Mediates ATP-dependent transport of glutathione and glutathione conjugates, leukotriene C4, estradiol-17-beta-o-glucuronide, methotrexate, antiviral drugs and other xenobiotics. Confers resistance to anticancer drugs by decreasing accumulation of drug in cells, and by mediating ATP- and GSH-dependent drug export. Hydrolyzes ATP with low efficiency. Catalyzes the export of sphingosine 1-phosphate from mast cells independently of their degranulation. Participates in inflammatory response by allowing export of leukotriene C4 from leukotriene C4-synthesizing cells. Mediates ATP-dependent, GSH-independent cyclic GMP-AMP (cGAMP) export. Thus, by limiting intracellular cGAMP concentrations negatively regulates the cGAS-STING pathway. Exports S-geranylgeranyl-glutathione (GGG) in lymphoid cells and stromal compartments of lymphoid organs. ABCC1 (via extracellular transport) with GGT5 (via GGG catabolism) establish GGG gradients within lymphoid tissues to position P2RY8-positive lymphocytes at germinal centers in lymphoid follicles and restrict their chemotactic transmigration from blood vessels to the bone marrow parenchyma. Mediates basolateral export of GSH-conjugated R- and S-prostaglandin A2 diastereomers in polarized epithelial cells. This Macaca fascicularis (Crab-eating macaque) protein is Multidrug resistance-associated protein 1.